Reading from the N-terminus, the 234-residue chain is DEAD-box ATP-dependent RNA helicase 3 (234 aa).

A Q motif motif is present at residues 120–148 (LAVSRLGLPQKLVETLEKRGITKLFPIQR). The 84-residue stretch at 151 to 234 (LVPALEGRDI…RTVCVYGGVS (84 aa)) folds into the Helicase ATP-binding domain. 164–171 (AKTGTGKT) contacts ATP.

This sequence belongs to the DEAD box helicase family. DDX21/DDX50 subfamily.

The sequence is that of DEAD-box ATP-dependent RNA helicase 3 from Helianthus annuus (Common sunflower).